The primary structure comprises 1397 residues: Clustered mitochondria protein homolog (1397 aa).

Residues 30–63 form a TPR 1 repeat; that stretch reads LPSFIDQKGDLKIPSHYEETITDLKLTLTVIPKT. Disordered stretches follow at residues 158–203 and 526–555; these read TARG…LSRE and DAAP…DEEE. Residues 161–203 show a composition bias toward basic and acidic residues; the sequence is GEAEKSDTNEEEQEQGKGKVGKPNEKESGETKETDSQPELSRE. The region spanning 368 to 640 is the Clu domain; that stretch reads DSSRSQLMLI…RTTPRDIEFI (273 aa). One copy of the TPR 2 repeat lies at 559–595; the sequence is EKVLYGLSSDSQKILEDKSFEKPLKLLSEVFHLKPHG. Composition is skewed to basic and acidic residues over residues 686 to 703, 812 to 831, 839 to 860, and 1019 to 1033; these read EGKL…EEKS, EKVE…KERA, SDDK…NTES, and QREQ…NVEK. Disordered regions lie at residues 686-707, 812-869, and 1019-1050; these read EGKL…QIAL, EKVE…EEQP, and QREQ…PIEN. Over residues 1034–1043 the composition is skewed to basic residues; that stretch reads KHSKKSKKKS. TPR repeat units follow at residues 1167–1200 and 1209–1242; these read IAAY…WTST and VNLL…CSHL. Composition is skewed to polar residues over residues 1314-1338 and 1362-1373; these read AQSK…SQAS and PQSDPQIANQSV. The segment at 1314–1397 is disordered; sequence AQSKKSPPPT…AKSKSKHTKA (84 aa). Basic and acidic residues predominate over residues 1375 to 1384; the sequence is DILKFIEGKS. Positions 1386-1397 are enriched in basic residues; sequence PNAKSKSKHTKA.

Belongs to the CLU family. May associate with the eukaryotic translation initiation factor 3 (eIF-3) complex.

It localises to the cytoplasm. In terms of biological role, mRNA-binding protein involved in proper cytoplasmic distribution of mitochondria. This is Clustered mitochondria protein homolog from Lodderomyces elongisporus (strain ATCC 11503 / CBS 2605 / JCM 1781 / NBRC 1676 / NRRL YB-4239) (Yeast).